The following is a 260-amino-acid chain: Indole-3-glycerol phosphate synthase (260 aa).

This sequence belongs to the TrpC family.

It catalyses the reaction 1-(2-carboxyphenylamino)-1-deoxy-D-ribulose 5-phosphate + H(+) = (1S,2R)-1-C-(indol-3-yl)glycerol 3-phosphate + CO2 + H2O. The protein operates within amino-acid biosynthesis; L-tryptophan biosynthesis; L-tryptophan from chorismate: step 4/5. This Staphylococcus aureus (strain COL) protein is Indole-3-glycerol phosphate synthase.